Here is a 427-residue protein sequence, read N- to C-terminus: Serine--tRNA ligase (427 aa).

228 to 230 (TSE) is an L-serine binding site. Residue 259–261 (RSE) participates in ATP binding. Glutamate 282 serves as a coordination point for L-serine. ATP is bound at residue 346-349 (EISS). Serine 384 contributes to the L-serine binding site.

The protein belongs to the class-II aminoacyl-tRNA synthetase family. Type-1 seryl-tRNA synthetase subfamily. As to quaternary structure, homodimer. The tRNA molecule binds across the dimer.

The protein localises to the cytoplasm. The catalysed reaction is tRNA(Ser) + L-serine + ATP = L-seryl-tRNA(Ser) + AMP + diphosphate + H(+). The enzyme catalyses tRNA(Sec) + L-serine + ATP = L-seryl-tRNA(Sec) + AMP + diphosphate + H(+). Its pathway is aminoacyl-tRNA biosynthesis; selenocysteinyl-tRNA(Sec) biosynthesis; L-seryl-tRNA(Sec) from L-serine and tRNA(Sec): step 1/1. Catalyzes the attachment of serine to tRNA(Ser). Is also able to aminoacylate tRNA(Sec) with serine, to form the misacylated tRNA L-seryl-tRNA(Sec), which will be further converted into selenocysteinyl-tRNA(Sec). The protein is Serine--tRNA ligase of Ehrlichia ruminantium (strain Welgevonden).